The primary structure comprises 367 residues: D-alanine--D-alanine ligase (367 aa).

The 207-residue stretch at 145–351 folds into the ATP-grasp domain; it reads KRLLRDAGLP…QPALMDALIA (207 aa). 174–229 is a binding site for ATP; sequence HAVGCSELFIKPANLGSSVGISKARTPQEFAAACDLALRFDGKILIERCISPVREI. Residues D306, E318, and N320 each coordinate Mg(2+).

Belongs to the D-alanine--D-alanine ligase family. The cofactor is Mg(2+). Mn(2+) serves as cofactor.

Its subcellular location is the cytoplasm. The catalysed reaction is 2 D-alanine + ATP = D-alanyl-D-alanine + ADP + phosphate + H(+). It participates in cell wall biogenesis; peptidoglycan biosynthesis. Its function is as follows. Cell wall formation. This chain is D-alanine--D-alanine ligase, found in Bradyrhizobium sp. (strain BTAi1 / ATCC BAA-1182).